The sequence spans 64 residues: Translational regulator CsrA (64 aa).

Belongs to the CsrA/RsmA family. Homodimer; the beta-strands of each monomer intercalate to form a hydrophobic core, while the alpha-helices form wings that extend away from the core.

Its subcellular location is the cytoplasm. Its function is as follows. A key translational regulator that binds mRNA to regulate translation initiation and/or mRNA stability. Mediates global changes in gene expression, shifting from rapid growth to stress survival by linking envelope stress, the stringent response and the catabolite repression systems. Usually binds in the 5'-UTR; binding at or near the Shine-Dalgarno sequence prevents ribosome-binding, repressing translation, binding elsewhere in the 5'-UTR can activate translation and/or stabilize the mRNA. Its function is antagonized by small RNA(s). This Methylococcus capsulatus (strain ATCC 33009 / NCIMB 11132 / Bath) protein is Translational regulator CsrA.